We begin with the raw amino-acid sequence, 80 residues long: UPF0291 protein EF_1580 (80 aa).

The disordered stretch occupies residues 60–80 (TDVTPEKLKKIQREKGLHNRK). Residues 63-80 (TPEKLKKIQREKGLHNRK) show a composition bias toward basic and acidic residues.

The protein belongs to the UPF0291 family.

Its subcellular location is the cytoplasm. This Enterococcus faecalis (strain ATCC 700802 / V583) protein is UPF0291 protein EF_1580.